The chain runs to 462 residues: ATP synthase subunit beta (462 aa).

151 to 158 (GGAGVGKT) contributes to the ATP binding site.

This sequence belongs to the ATPase alpha/beta chains family. F-type ATPases have 2 components, CF(1) - the catalytic core - and CF(0) - the membrane proton channel. CF(1) has five subunits: alpha(3), beta(3), gamma(1), delta(1), epsilon(1). CF(0) has three main subunits: a(1), b(2) and c(9-12). The alpha and beta chains form an alternating ring which encloses part of the gamma chain. CF(1) is attached to CF(0) by a central stalk formed by the gamma and epsilon chains, while a peripheral stalk is formed by the delta and b chains.

The protein resides in the cell inner membrane. The catalysed reaction is ATP + H2O + 4 H(+)(in) = ADP + phosphate + 5 H(+)(out). Its function is as follows. Produces ATP from ADP in the presence of a proton gradient across the membrane. The catalytic sites are hosted primarily by the beta subunits. This chain is ATP synthase subunit beta, found in Chlorobium limicola.